Consider the following 470-residue polypeptide: MNPNQKIIAIGSASLGILILNVILHVVSIIVTVLVLNNNGTGLNCNRTIIREYNETVRVERITQWYNTSTIEYIERPSNEYYMNNTEPLCEAQGFAPFSKDNGIRIGSRGHVFVIREPFVSCSPSECRTFFLTQGSLLNDKHSNGTMKDRSPYRTLMSVKIGQSPNVYQARFEAVAWSATACHDGKKWMTVGVTGPDNQAVAVVNYGGVPVDIINSWAGDILRTQESSCTCIKGDCYWVMTDGPANRQAKYRIFKAKDGRIIGQTDISFNGGHIEECSCYPNEGKVECICRDNWTGTNRPILVISSDLSYTVGYLCAGIPTDTPRGEDSQFTGSCTSPLGNKGYGVKGFGFRQGTDVWAGRTISRTSRSGFEIIKIRNGWTQNSKDQIRRQVIIDNLNWSGYSGSFTLPVELTKKGCLVPCFWVEMIRGKPEETTIWTSSSSIVMCGVDHKIASWSWHDGAILPFDIDKM.

Residues 1–14 (MNPNQKIIAIGSAS) are Intravirion-facing. An involved in apical transport and lipid raft association region spans residues 11–32 (GSASLGILILNVILHVVSIIVT). A helical transmembrane segment spans residues 15-35 (LGILILNVILHVVSIIVTVLV). The hypervariable stalk region stretch occupies residues 32–86 (TVLVLNNNGTGLNCNRTIIREYNETVRVERITQWYNTSTIEYIERPSNEYYMNNT). Residues 36–470 (LNNNGTGLNC…AILPFDIDKM (435 aa)) are Virion surface-facing. 5 N-linked (GlcNAc...) asparagine; by host glycosylation sites follow: Asn39, Asn46, Asn54, Asn67, and Asn84. Residues 89–470 (LCEAQGFAPF…AILPFDIDKM (382 aa)) form a head of neuraminidase region. 8 disulfides stabilise this stretch: Cys90–Cys417, Cys122–Cys127, Cys182–Cys229, Cys231–Cys236, Cys277–Cys290, Cys279–Cys288, Cys316–Cys335, and Cys421–Cys446. Arg116 lines the substrate pocket. Asn144 is a glycosylation site (N-linked (GlcNAc...) asparagine; by host). Asp149 functions as the Proton donor/acceptor in the catalytic mechanism. Arg150 serves as a coordination point for substrate. 275–276 (EE) serves as a coordination point for substrate. Residue Arg291 coordinates substrate. Ca(2+) is bound at residue Asp292. The N-linked (GlcNAc...) asparagine; by host glycan is linked to Asn293. Ca(2+) is bound by residues Gly296 and Asp322. Arg368 is a substrate binding site. An N-linked (GlcNAc...) asparagine; by host glycan is attached at Asn398. The active-site Nucleophile is the Tyr402.

The protein belongs to the glycosyl hydrolase 34 family. In terms of assembly, homotetramer. Requires Ca(2+) as cofactor. N-glycosylated.

The protein resides in the virion membrane. The protein localises to the host apical cell membrane. It carries out the reaction Hydrolysis of alpha-(2-&gt;3)-, alpha-(2-&gt;6)-, alpha-(2-&gt;8)- glycosidic linkages of terminal sialic acid residues in oligosaccharides, glycoproteins, glycolipids, colominic acid and synthetic substrates.. With respect to regulation, inhibited by the neuraminidase inhibitors zanamivir (Relenza) and oseltamivir (Tamiflu). These drugs interfere with the release of progeny virus from infected cells and are effective against all influenza strains. Resistance to neuraminidase inhibitors is quite rare. In terms of biological role, catalyzes the removal of terminal sialic acid residues from viral and cellular glycoconjugates. Cleaves off the terminal sialic acids on the glycosylated HA during virus budding to facilitate virus release. Additionally helps virus spread through the circulation by further removing sialic acids from the cell surface. These cleavages prevent self-aggregation and ensure the efficient spread of the progeny virus from cell to cell. Otherwise, infection would be limited to one round of replication. Described as a receptor-destroying enzyme because it cleaves a terminal sialic acid from the cellular receptors. May facilitate viral invasion of the upper airways by cleaving the sialic acid moieties on the mucin of the airway epithelial cells. Likely to plays a role in the budding process through its association with lipid rafts during intracellular transport. May additionally display a raft-association independent effect on budding. Plays a role in the determination of host range restriction on replication and virulence. Sialidase activity in late endosome/lysosome traffic seems to enhance virus replication. In Aves (Horse), this protein is Neuraminidase.